The primary structure comprises 391 residues: S-adenosylmethionine synthase 1 (391 aa).

A Mg(2+)-binding site is contributed by Glu9. His15 is an ATP binding site. Residue Glu43 participates in K(+) binding. L-methionine contacts are provided by Glu56 and Gln99. Residues 167–169, 235–238, Asp246, 252–253, Ala269, Lys273, and Lys277 contribute to the ATP site; these read DGK, SGRF, and RK. Residue Asp246 participates in L-methionine binding. Lys277 is a binding site for L-methionine.

The protein belongs to the AdoMet synthase family. As to quaternary structure, homotetramer. Requires Mn(2+) as cofactor. It depends on Mg(2+) as a cofactor. The cofactor is Co(2+). K(+) is required as a cofactor.

It is found in the cytoplasm. It catalyses the reaction L-methionine + ATP + H2O = S-adenosyl-L-methionine + phosphate + diphosphate. It participates in amino-acid biosynthesis; S-adenosyl-L-methionine biosynthesis; S-adenosyl-L-methionine from L-methionine: step 1/1. Its function is as follows. Catalyzes the formation of S-adenosylmethionine from methionine and ATP. The reaction comprises two steps that are both catalyzed by the same enzyme: formation of S-adenosylmethionine (AdoMet) and triphosphate, and subsequent hydrolysis of the triphosphate. In Vitis vinifera (Grape), this protein is S-adenosylmethionine synthase 1 (METK1).